We begin with the raw amino-acid sequence, 952 residues long: uncharacterized protein (952 aa).

One can recognise a CheB-type methylesterase domain in the interval 1-141; that stretch reads MASLLARHTK…PWIADYLIRR (141 aa). In terms of domain architecture, CheR-type methyltransferase spans 168–440; sequence VGQFDGLEPA…SARHRIWQAL (273 aa). Residues 923–935 are compositionally biased toward polar residues; it reads HNQTEASPETSSG. The disordered stretch occupies residues 923–952; the sequence is HNQTEASPETSSGGLPGSDGTGADGGAPRA. Over residues 936 to 952 the composition is skewed to gly residues; the sequence is GLPGSDGTGADGGAPRA.

This is an uncharacterized protein from Rhodobacter capsulatus (Rhodopseudomonas capsulata).